The following is a 522-amino-acid chain: Glutamate--cysteine ligase (522 aa).

This sequence belongs to the glutamate--cysteine ligase type 1 family. Type 1 subfamily.

The catalysed reaction is L-cysteine + L-glutamate + ATP = gamma-L-glutamyl-L-cysteine + ADP + phosphate + H(+). It functions in the pathway sulfur metabolism; glutathione biosynthesis; glutathione from L-cysteine and L-glutamate: step 1/2. In Vibrio parahaemolyticus serotype O3:K6 (strain RIMD 2210633), this protein is Glutamate--cysteine ligase.